The chain runs to 256 residues: Acetyl-coenzyme A carboxylase carboxyl transferase subunit alpha (256 aa).

The CoA carboxyltransferase C-terminal domain maps to 1 to 236 (MTDVARILKE…KEHLKTEINQ (236 aa)).

Belongs to the AccA family. In terms of assembly, acetyl-CoA carboxylase is a heterohexamer composed of biotin carboxyl carrier protein (AccB), biotin carboxylase (AccC) and two subunits each of ACCase subunit alpha (AccA) and ACCase subunit beta (AccD).

It is found in the cytoplasm. It carries out the reaction N(6)-carboxybiotinyl-L-lysyl-[protein] + acetyl-CoA = N(6)-biotinyl-L-lysyl-[protein] + malonyl-CoA. It participates in lipid metabolism; malonyl-CoA biosynthesis; malonyl-CoA from acetyl-CoA: step 1/1. Component of the acetyl coenzyme A carboxylase (ACC) complex. First, biotin carboxylase catalyzes the carboxylation of biotin on its carrier protein (BCCP) and then the CO(2) group is transferred by the carboxyltransferase to acetyl-CoA to form malonyl-CoA. The sequence is that of Acetyl-coenzyme A carboxylase carboxyl transferase subunit alpha from Streptococcus uberis (strain ATCC BAA-854 / 0140J).